The following is a 390-amino-acid chain: uncharacterized protein (390 aa).

It belongs to the arsA ATPase family.

This is an uncharacterized protein from Streptomyces coelicolor (strain ATCC BAA-471 / A3(2) / M145).